A 256-amino-acid chain; its full sequence is Na(+)-translocating NADH-quinone reductase subunit C (256 aa).

A helical transmembrane segment spans residues 12–32 (LGVVIGLSLVCSIIVSTAAVG). At Thr224 the chain carries FMN phosphoryl threonine.

This sequence belongs to the NqrC family. Composed of six subunits; NqrA, NqrB, NqrC, NqrD, NqrE and NqrF. The cofactor is FMN.

Its subcellular location is the cell inner membrane. It carries out the reaction a ubiquinone + n Na(+)(in) + NADH + H(+) = a ubiquinol + n Na(+)(out) + NAD(+). With respect to regulation, this reaction is tightly coupled to the Na(+) pumping activity and specifically requires Na(+) for activity. Inhibited by korormicin and 2-N-heptyl-4-hydroxyquinoline N-oxide (HQNO). NQR complex catalyzes the reduction of ubiquinone-1 to ubiquinol by two successive reactions, coupled with the transport of Na(+) ions from the cytoplasm to the periplasm. NqrA to NqrE are probably involved in the second step, the conversion of ubisemiquinone to ubiquinol. This chain is Na(+)-translocating NADH-quinone reductase subunit C, found in Vibrio alginolyticus.